The chain runs to 164 residues: Interferon gamma (164 aa).

The first 19 residues, 1–19 (MTCQTYCLFVLSVIMIYFG), serve as a signal peptide directing secretion. Residues Asn42, Asn61, and Asn95 are each glycosylated (N-linked (GlcNAc...) asparagine).

This sequence belongs to the type II (or gamma) interferon family. Homodimer.

The protein localises to the secreted. Produced by lymphocytes activated by specific antigens or mitogens. IFN-gamma, in addition to having antiviral activity, has important immunoregulatory functions. It is a potent activator of macrophages, it has antiproliferative effects on transformed cells and it can potentiate the antiviral and antitumor effects of the type I interferons. This is Interferon gamma (IFNG) from Anas platyrhynchos (Mallard).